A 1687-amino-acid polypeptide reads, in one-letter code: Genome polyprotein (1687 aa).

Positions 1–13 (MRMATPSSAPSVR) are enriched in polar residues. The tract at residues 1-56 (MRMATPSSAPSVRNTEKRKNKKASSKASVSFGAPSPLSSESEDEINYMTPPEQEAQ) is disordered. Positions 1–116 (MRMATPSSAP…FRRYPHLRPK (116 aa)) are interaction with host MAP1LC3A/LC3. An interaction with NTPase region spans residues 117–341 (EDRPDAPSHA…ISIFGEWQAE (225 aa)). Residues 244 to 341 (SPVQDWNVDP…ISIFGEWQAE (98 aa)) are interaction with NS4. Host ER membrane association regions lie at residues 261-292 (KLRM…KPLN) and 302-341 (WTFS…WQAE). The tract at residues 342-518 (GPFDLALDVV…GKTCFCQNLA (177 aa)) is interaction with NS1-2, NS4 and homooligomerization. Residues 476–641 (RISMARAAFE…DDARARAPGD (166 aa)) enclose the SF3 helicase domain. 504–511 (GRPGIGKT) is a binding site for ATP. The tract at residues 595 to 700 (VIIITTNQQT…AVALVHERHD (106 aa)) is important for mitochondrion targeting. The acidic stretch occupies residues 893-898 (DEEYDE). Tyr896 bears the O-(5'-phospho-RNA)-tyrosine mark. The interaction with host EIF4G stretch occupies residues 978-994 (WADDDRQVDYGEKINFE). The 178-residue stretch at 995–1172 (APVSIWSRVV…AATHGEPTLE (178 aa)) folds into the Peptidase C37 domain. Catalysis depends on for 3CLpro activity residues His1024, Asp1048, and Cys1133. One can recognise a RdRp catalytic domain in the interval 1416 to 1537 (RYHMDADYTR…STNLELDMVK (122 aa)). Mg(2+) contacts are provided by Asp1420 and Asp1422. Cys1482 and Cys1484 are joined by a disulfide. Residues Asp1524, Glu1525, and Ser1569 each contribute to the Mg(2+) site.

Homodimer. Interacts with NTPase; this interaction increases the proapoptotic activity of the NTPase and is crucial for the formation of the viral replication complex. Interacts with NS4; this interaction is crucial for the formation of the viral replication complex. Interacts (via N-terminus) with host VAPA. Interacts with host VAPB. As to quaternary structure, monomer. In terms of assembly, homooligomer. Interacts with NS1-2; this interaction increases the proapoptotic activity of the NTPase and is crucial for the formation of the viral replication complex. Interacts with NS4; this interaction increases the proapoptotic activity of the NTPase. Interacts with host G3BP1; this interaction leads to the redistribution of G3BP1 and its cellular partners to the viral replication complexes, thereby preventing the assembly of stress granules. Homodimer. Monomer; in solution. As to quaternary structure, interacts with NTPase; this interaction increases the proapoptotic activity of the NTPase. Interacts with NS1-2; this interaction is crucial for the formation of the viral replication complex. In terms of assembly, monomer. Interacts with the RNA-directed RNA polymerase; this interaction induces the multimerization of the RdRp and enhances its activity. Interacts with host IEF4E; this interaction plays a role in translation of viral proteins. Interacts (via C-terminus) with host IEF4G1 (via central domain); this interaction plays a role in translation of viral proteins. Homohexamer; also forms fibrous hexameric oligomer. Interacts with the viral genome-linked protein; this interaction induces the multimerization of the RdRp and enhances its activity. The cofactor is Mg(2+). Mn(2+) is required as a cofactor. Specific enzymatic cleavages in vivo yield mature proteins. 3CLpro is first autocatalytically cleaved, then processes the whole polyprotein. In terms of processing, cleaved by host CASP3/caspase 3 at 18-22 h.p.i. The cleavage allows NS1 secretion, which is essential for intestinal infection and resistance to IFN-lambda. Post-translationally, VPg is uridylylated by the polymerase and is covalently attached to the 5'-end of the polyadenylated genomic and subgenomic RNAs. This uridylylated form acts as a nucleotide-peptide primer for the polymerase.

Its subcellular location is the host endoplasmic reticulum membrane. The protein resides in the secreted. The protein localises to the host endosome membrane. It localises to the host mitochondrion. It is found in the host cytoplasm. Its subcellular location is the host perinuclear region. It carries out the reaction a ribonucleoside 5'-triphosphate + H2O = a ribonucleoside 5'-diphosphate + phosphate + H(+). The catalysed reaction is Endopeptidase with a preference for cleavage when the P1 position is occupied by Glu-|-Xaa and the P1' position is occupied by Gly-|-Yaa.. The enzyme catalyses RNA(n) + a ribonucleoside 5'-triphosphate = RNA(n+1) + diphosphate. Its activity is regulated as follows. Inhibited by Suramin, Suramin-related compounds and NF023. Inhibited by PPNDS. Its function is as follows. Induces the proliferation of the host smooth ER membranes forming long tubular structures. These remodeled membranes probably form the viral factories that contain the replication complex. May play a role in viral replication by interacting with host VAPA, a vesicle-associated membrane protein that plays a role in SNARE-mediated vesicle fusion. This interaction may target replication complex to intracellular membranes. In terms of biological role, promotes intestinal tropism and persistent fecal shedding in strain CR6. This function requires Glu-94 and is present in persistant strains. Displays NTPase activity, but probably no helicase activity. Displays RNA chaperone-like activity and destabilizes dsRNA. Induces the formation of convoluted membranes derived from the host ER. These remodeled membranes probably form the viral factories that contain the replication complex. Initiates host cell death by targeting the mitochondrial outer membrane, leading to the permeabilization of mitochondria, programmed host cell death and viral egress. Externalization of host cardiolipin seems to be involved in the process. Probably plays a role in preventing the assembly of host stress granules. Functionally, probable key protein responsible for the formation of membrane alterations by the virus. Induces the formation of convoluted membranes derived from the host ER. These remodeled membranes probably form the viral factories that contain the replication complex. May play a role in targeting replication complex to intracellular membranes. Its function is as follows. Viral genome-linked protein is covalently linked to the 5'-end of the positive-strand, negative-strand genomic RNAs and subgenomic RNA. Acts as a genome-linked replication primer. May recruit ribosome to viral RNA thereby promoting viral proteins translation. Interacts with host translation initiation complex to allow the translation of viral proteins. Induces the formation of aggregates of RNA-directed RNA polymerase in the presence of RNA. Through its interaction with the viral RNA-directed RNA polymerase, plays a crucial role in enhancing the polymerase activity. In terms of biological role, processes the polyprotein. 3CLpro-RdRp is first released by autocleavage, then all other proteins are cleaved. May cleave host polyadenylate-binding protein thereby inhibiting cellular translation. Does not cleave host G3BP1. Replicates genomic and antigenomic RNA by recognizing replications specific signals. Also transcribes a subgenomic mRNA by initiating RNA synthesis internally on antigenomic RNA. This sgRNA codes for structural proteins. Catalyzes the covalent attachment VPg with viral RNAs. The chain is Genome polyprotein from Norovirus (isolate Mouse/NoV/United States/MNV1/2002/GV) (MNV-1).